The chain runs to 410 residues: Sprouty-related, EVH1 domain-containing protein 2 (410 aa).

Positions 5–122 constitute a WH1 domain; the sequence is THPDDDSYIV…RGVRKAIEDL (118 aa). The disordered stretch occupies residues 127-171; sequence TTSSSTIHNEAELGDDDVFTTATDSSSNSSQKREPNTRTISSPTS. Positions 146-156 are enriched in polar residues; the sequence is TTATDSSSNSS. One can recognise a KBD domain in the interval 197–252; that stretch reads SYPQVTFPEDDEEIVRINPREKIWMTGYEDYRHAPVRGKYLDSTEDADSYVRFAKG. 2 positions are modified to phosphotyrosine: Y224 and Y227. A disordered region spans residues 274 to 294; that stretch reads DPKGNVIKTQPPRAKSRRRKE. The 109-residue stretch at 300–408 folds into the SPR domain; sequence RCVYCRDMFN…CRCCGGKHKA (109 aa).

In terms of assembly, homodimer and heterodimer. Able to interact with SPRED1 to form heterodimers. Interacts with RAS. May interact with ZDHHC13 (via ANK repeats) and ZDHHC17 (via ANK repeats). Interacts with TESK1. Interacts with NF1. Phosphorylated on serine and threonine residues. Phosphorylated on tyrosine. Phosphorylation of Tyr-224 and Tyr-227 are required for ubiquitination. Post-translationally, ubiquitinated; leading to degradation by the proteasome. In terms of tissue distribution, expressed in the eye, with higher expression in lens epithelium than in lens fiber cells at postnatal day 15.

It is found in the cell membrane. Its subcellular location is the cytoplasmic vesicle. The protein localises to the secretory vesicle membrane. The protein resides in the cytoplasm. In terms of biological role, negatively regulates Ras signaling pathways and downstream activation of MAP kinases. Recruits and translocates NF1 to the cell membrane, thereby enabling NF1-dependent hydrolysis of active GTP-bound Ras to inactive GDP-bound Ras. Inhibits fibroblast growth factor (FGF)-induced retinal lens fiber differentiation, probably by inhibiting FGF-mediated phosphorylation of ERK1/2. Inhibits TGFB-induced epithelial-to-mesenchymal transition in lens epithelial cells. The sequence is that of Sprouty-related, EVH1 domain-containing protein 2 (Spred2) from Rattus norvegicus (Rat).